A 210-amino-acid chain; its full sequence is Isomeliandiol synthase ISM1 (210 aa).

Transmembrane regions (helical) follow at residues 17–37, 50–70, 107–127, 135–155, and 172–192; these read FTLH…TWFI, LLCW…YFVF, IEGM…YAIV, ILQF…FLTA, and YYVG…INFW. The EXPERA domain maps to 46–188; the sequence is GDRLLLCWWA…IWIIVPSLIA (143 aa).

This sequence belongs to the EBP family.

It localises to the membrane. It carries out the reaction 7,8-epoxymelianol = isomeliandiol. It participates in secondary metabolite biosynthesis; terpenoid biosynthesis. Isomerase involved in the biosynthesis of limonoids and quassinoids triterpene natural products such as ailanthone, chaparrinone, glaucarubinone and amarolide, allelopathic degraded triterpene lactones inhibiting the growth of other plants, and possessing antimalarial, antifeedant, insecticidal, anti-inflammatory and anticancer activities. Catalyzes the conversion of 7,8-epoxymelianol to isomeliandiol via skeletal rearrangements. The sequence is that of Isomeliandiol synthase ISM1 from Ailanthus altissima (Tree-of-heaven).